A 113-amino-acid chain; its full sequence is Cell division protein FtsB (113 aa).

At 1–3 (MRL) the chain is on the cytoplasmic side. A helical membrane pass occupies residues 4 to 21 (ISLLLFVLLLAIQYPLWL). Residues 22–113 (GKGGWLRVWD…PNSVAGRGGH (92 aa)) are Periplasmic-facing. A coiled-coil region spans residues 34–64 (RQVNEQTVHNQALKLRNAKLEGEVKDLQDGT). Positions 93–113 (KVSATPPLPPPPNSVAGRGGH) are disordered.

The protein belongs to the FtsB family. Part of a complex composed of FtsB, FtsL and FtsQ.

It localises to the cell inner membrane. Functionally, essential cell division protein. May link together the upstream cell division proteins, which are predominantly cytoplasmic, with the downstream cell division proteins, which are predominantly periplasmic. The protein is Cell division protein FtsB of Cupriavidus metallidurans (strain ATCC 43123 / DSM 2839 / NBRC 102507 / CH34) (Ralstonia metallidurans).